The following is a 411-amino-acid chain: Phosphoglycerate kinase (411 aa).

Substrate-binding positions include 19-21 (DLN), arginine 34, 57-60 (HQSR), arginine 114, and arginine 154. Residues glutamate 332 and 358 to 361 (GGHS) contribute to the ATP site.

The protein belongs to the phosphoglycerate kinase family. Monomer.

Its subcellular location is the cytoplasm. The enzyme catalyses (2R)-3-phosphoglycerate + ATP = (2R)-3-phospho-glyceroyl phosphate + ADP. It functions in the pathway carbohydrate degradation; glycolysis; pyruvate from D-glyceraldehyde 3-phosphate: step 2/5. This Thermococcus kodakarensis (strain ATCC BAA-918 / JCM 12380 / KOD1) (Pyrococcus kodakaraensis (strain KOD1)) protein is Phosphoglycerate kinase.